Reading from the N-terminus, the 123-residue chain is Small ribosomal subunit protein uS12 (123 aa).

Aspartate 89 is subject to 3-methylthioaspartic acid.

It belongs to the universal ribosomal protein uS12 family. As to quaternary structure, part of the 30S ribosomal subunit. Contacts proteins S8 and S17. May interact with IF1 in the 30S initiation complex.

In terms of biological role, with S4 and S5 plays an important role in translational accuracy. Interacts with and stabilizes bases of the 16S rRNA that are involved in tRNA selection in the A site and with the mRNA backbone. Located at the interface of the 30S and 50S subunits, it traverses the body of the 30S subunit contacting proteins on the other side and probably holding the rRNA structure together. The combined cluster of proteins S8, S12 and S17 appears to hold together the shoulder and platform of the 30S subunit. This Citrifermentans bemidjiense (strain ATCC BAA-1014 / DSM 16622 / JCM 12645 / Bem) (Geobacter bemidjiensis) protein is Small ribosomal subunit protein uS12.